We begin with the raw amino-acid sequence, 559 residues long: Transcription factor tstO (559 aa).

The zn(2)-C6 fungal-type DNA-binding region spans 23-50; sequence CDACQSAKVRCGREKPTCRRCQNQGKTC. Disordered regions lie at residues 166-316 and 453-477; these read GPST…TGFS and ASPP…ISTA. Low complexity predominate over residues 222–232; that stretch reads SSESLSLEPSS. A compositionally biased stretch (polar residues) spans 255–267; sequence TRGSQKISPNPHS. The span at 268–279 shows a compositional bias: basic and acidic residues; the sequence is IDSRTSSRDKSF. Low complexity-rich tracts occupy residues 286 to 316 and 462 to 477; these read STLG…TGFS and NNNT…ISTA.

It is found in the nucleus. In terms of biological role, transcription factore; part of the gene cluster that mediates the biosynthesis of the antihypercholesterolemic agents phomoidrides which are dimeric anhydrides. Probably regulates the expression of the genes from the cluster. The chain is Transcription factor tstO from Talaromyces stipitatus (strain ATCC 10500 / CBS 375.48 / QM 6759 / NRRL 1006) (Penicillium stipitatum).